A 122-amino-acid polypeptide reads, in one-letter code: Large ribosomal subunit protein uL14c (122 aa).

It belongs to the universal ribosomal protein uL14 family. In terms of assembly, part of the 50S ribosomal subunit.

It localises to the plastid. Its subcellular location is the chloroplast. Its function is as follows. Binds to 23S rRNA. The sequence is that of Large ribosomal subunit protein uL14c from Populus trichocarpa (Western balsam poplar).